A 460-amino-acid chain; its full sequence is Muscarinic acetylcholine receptor M1 (460 aa).

Topologically, residues 1 to 22 (MNTSVPPAVSPNITVLAPGKGP) are extracellular. N-linked (GlcNAc...) asparagine glycans are attached at residues asparagine 2 and asparagine 12. Residues 23 to 48 (WQVAFIGITTGLLSLATVTGNLLVLI) form a helical membrane-spanning segment. Residues 49 to 62 (SFKVNTELKTVNNY) are Cytoplasmic-facing. A helical membrane pass occupies residues 63–84 (FLLSLACADLIIGTFSMNLYTT). Over 85–95 (YLLMGHWALGT) the chain is Extracellular. The helical transmembrane segment at 96 to 121 (LACDLWLALDYVASNASVMNLLLISF) threads the bilayer. A disulfide bridge connects residues cysteine 98 and cysteine 178. At 122-142 (DRYFSVTRPLSYRAKRTPRRA) the chain is on the cytoplasmic side. A helical membrane pass occupies residues 143–164 (ALMIGLAWLVSFVLWAPAILFW). Residues 165–185 (QYLVGERTVLAGQCYIQFLSQ) are Extracellular-facing. The helical transmembrane segment at 186–209 (PIITFGTAMAAFYLPVTVMCTLYW) threads the bilayer. Residues 210–366 (RIYRETENRA…LVKEKKAART (157 aa)) lie on the Cytoplasmic side of the membrane. Disordered stretches follow at residues 225 to 257 (LQGSETPGKGGGSSSSSERSQPGAEGSPESPPG), 274 to 297 (WKEEEEEDEGSMESLTSSEGEEPG), and 310 to 351 (EAQA…QLAK). At threonine 230 the chain carries Phosphothreonine. The span at 238-257 (SSSSERSQPGAEGSPESPPG) shows a compositional bias: low complexity. Serine 254 is modified (phosphoserine). Residues 328–343 (RPTKKGRDRGGKGQKP) show a composition bias toward basic residues. Residues 367-390 (LSAILLAFILTWTPYNIMVLVSTF) form a helical membrane-spanning segment. Residues 391–397 (CKDCVPE) lie on the Extracellular side of the membrane. The chain crosses the membrane as a helical span at residues 398-420 (TLWELGYWLCYVNSTVNPMCYAL). Residues 421-460 (CNKAFRDTFRLLLLCRWDKRRWRKIPKRPGSVHRTPSRQC) lie on the Cytoplasmic side of the membrane. Position 451 is a phosphoserine (serine 451). Phosphothreonine is present on threonine 455. Serine 457 carries the post-translational modification Phosphoserine.

It belongs to the G-protein coupled receptor 1 family. Muscarinic acetylcholine receptor subfamily. CHRM1 sub-subfamily. Interacts with GPRASP2. Interacts with TMEM147.

It localises to the cell membrane. Its subcellular location is the postsynaptic cell membrane. Its function is as follows. The muscarinic acetylcholine receptor mediates various cellular responses, including inhibition of adenylate cyclase, breakdown of phosphoinositides and modulation of potassium channels through the action of G proteins. Primary transducing effect is Pi turnover. The sequence is that of Muscarinic acetylcholine receptor M1 (Chrm1) from Mus musculus (Mouse).